The sequence spans 954 residues: Valine--tRNA ligase (954 aa).

The short motif at 48–58 (PNVTGSLHMGH) is the 'HIGH' region element. Residues 560–564 (KMSKS) carry the 'KMSKS' region motif. Position 563 (Lys-563) interacts with ATP. A coiled-coil region spans residues 883–953 (AGFINKEAEL…IQEQYKAIEA (71 aa)).

Belongs to the class-I aminoacyl-tRNA synthetase family. ValS type 1 subfamily. Monomer.

The protein resides in the cytoplasm. The catalysed reaction is tRNA(Val) + L-valine + ATP = L-valyl-tRNA(Val) + AMP + diphosphate. Functionally, catalyzes the attachment of valine to tRNA(Val). As ValRS can inadvertently accommodate and process structurally similar amino acids such as threonine, to avoid such errors, it has a 'posttransfer' editing activity that hydrolyzes mischarged Thr-tRNA(Val) in a tRNA-dependent manner. The polypeptide is Valine--tRNA ligase (Haemophilus influenzae (strain PittEE)).